A 268-amino-acid chain; its full sequence is Putative F-box protein At3g23420 (268 aa).

In terms of domain architecture, F-box spans 5 to 51 (PRDLSDLPRNMAEEVLSRVPMTSLRRLRFTCKKWNTLSRCRSFAKKH).

This chain is Putative F-box protein At3g23420, found in Arabidopsis thaliana (Mouse-ear cress).